We begin with the raw amino-acid sequence, 183 residues long: MDHLTKEQIAEFREAFNLFDKDGDGTITSKELGTVMGSLGQSPTEAELKKMVEEVDADGSGSIEFEEFLGLLARKLRDTGAEDDIREAFRVFDKDQNGFITPDELRHVMANLGDPLSDDELADMLHEADSDGDGQINYNEFLKVMMAKRRQNMMEGHGSGGHRSSNSHKKSGCCGPNSSCTIL.

EF-hand domains are found at residues 7-42, 43-78, 80-115, and 116-151; these read EQIA…LGQS, PTEA…KLRD, GAED…LGDP, and LSDD…KRRQ. Positions 20, 22, 24, 26, 31, 56, 58, 60, 62, 67, 93, 95, 97, 104, 129, 131, 133, 135, and 140 each coordinate Ca(2+). Residues 154 to 183 are disordered; sequence MEGHGSGGHRSSNSHKKSGCCGPNSSCTIL. 2 S-palmitoyl cysteine lipidation sites follow: C173 and C174. C180 is modified (cysteine methyl ester). A lipid anchor (S-farnesyl cysteine) is attached at C180. A propeptide spans 181–183 (removed in mature form); the sequence is TIL.

This sequence belongs to the calmodulin family.

The protein localises to the membrane. Potential calcium sensor. This chain is Putative calmodulin-like protein 2 (CML2), found in Oryza sativa subsp. japonica (Rice).